Reading from the N-terminus, the 274-residue chain is 3-methyl-2-oxobutanoate hydroxymethyltransferase (274 aa).

Mg(2+) contacts are provided by aspartate 44 and aspartate 83. 3-methyl-2-oxobutanoate contacts are provided by residues 44-45 (DS), aspartate 83, and lysine 113. Residue glutamate 115 coordinates Mg(2+). Glutamate 182 functions as the Proton acceptor in the catalytic mechanism.

Belongs to the PanB family. In terms of assembly, homodecamer; pentamer of dimers. Mg(2+) serves as cofactor.

It localises to the cytoplasm. The catalysed reaction is 3-methyl-2-oxobutanoate + (6R)-5,10-methylene-5,6,7,8-tetrahydrofolate + H2O = 2-dehydropantoate + (6S)-5,6,7,8-tetrahydrofolate. The protein operates within cofactor biosynthesis; (R)-pantothenate biosynthesis; (R)-pantoate from 3-methyl-2-oxobutanoate: step 1/2. Functionally, catalyzes the reversible reaction in which hydroxymethyl group from 5,10-methylenetetrahydrofolate is transferred onto alpha-ketoisovalerate to form ketopantoate. The sequence is that of 3-methyl-2-oxobutanoate hydroxymethyltransferase from Campylobacter jejuni subsp. doylei (strain ATCC BAA-1458 / RM4099 / 269.97).